Here is a 467-residue protein sequence, read N- to C-terminus: MKEYPSVTVIGAGLAGSEAAWQIASAGIKVTLFEMRPKKKSLAHHTSEFAELVCSNSFGALSSDRAAGLLQEELRTLQSIVINNADKYSVPAGGALAVDRSQFSLSITNEVSSHPLITIIRDECPCLPKAHQITILATGPLTSELLAKDIKEFTGEKECHFFDAASPIITGESIDFLTAFRASRYDKGDADYVNCPMNEDSYIKFHSELIKAEQAELKDFEKESANFFEGCLPIEQLAKRGIETMRYGPLKPIGIWDPRWGDVNDKSIRRLKRAHAVVQLRQEDKAGKLWNLVGFQTNLKWGEQKRIFRMIPGLSKAEFIRFGVMHRNTFIESPKLIEPTLQFTNRKTLFAAGQLTGTEGYAAAVAGGWLAGTNAALLAKGLDTITLPSSTMIGALTNFVSNSQASLRVKNKKNFQPMPANFGILPELDIRVHNKRERYKEYRDRALRQIKKLRETLLDKSSSPTNI.

11 to 16 is an FAD binding site; that stretch reads GAGLAG.

It belongs to the MnmG family. TrmFO subfamily. The cofactor is FAD.

The protein resides in the cytoplasm. It catalyses the reaction uridine(54) in tRNA + (6R)-5,10-methylene-5,6,7,8-tetrahydrofolate + NADH + H(+) = 5-methyluridine(54) in tRNA + (6S)-5,6,7,8-tetrahydrofolate + NAD(+). The enzyme catalyses uridine(54) in tRNA + (6R)-5,10-methylene-5,6,7,8-tetrahydrofolate + NADPH + H(+) = 5-methyluridine(54) in tRNA + (6S)-5,6,7,8-tetrahydrofolate + NADP(+). In terms of biological role, catalyzes the folate-dependent formation of 5-methyl-uridine at position 54 (M-5-U54) in all tRNAs. The sequence is that of Methylenetetrahydrofolate--tRNA-(uracil-5-)-methyltransferase TrmFO from Prochlorococcus marinus (strain NATL2A).